Reading from the N-terminus, the 501-residue chain is DEAD-box ATP-dependent RNA helicase 20 (501 aa).

2 stretches are compositionally biased toward basic and acidic residues: residues Met1–Asp20 and Ser38–Leu53. The disordered stretch occupies residues Met1–Leu53. Residues Lys99 to Ser127 carry the Q motif motif. The Helicase ATP-binding domain occupies Trp130–Val305. Ala143 to Thr150 provides a ligand contact to ATP. A DEAD box motif is present at residues Asp253 to Asp256. The region spanning Lys333–Gly478 is the Helicase C-terminal domain. A disordered region spans residues Glu473–Ser501. The segment covering Phe491–Ser501 has biased composition (basic and acidic residues).

It belongs to the DEAD box helicase family. DDX5/DBP2 subfamily.

The protein localises to the nucleus. The enzyme catalyses ATP + H2O = ADP + phosphate + H(+). Functionally, ATP-dependent RNA helicase involved nonsense-mediated mRNA decay and ribosome biogenesis through rRNA processing. The protein is DEAD-box ATP-dependent RNA helicase 20 (RH20) of Arabidopsis thaliana (Mouse-ear cress).